The primary structure comprises 413 residues: DnaJ protein homolog (413 aa).

The region spanning 10–75 (NTKYYEILGV…REIYDQYGED (66 aa)) is the J domain. The CR-type zinc finger occupies 133-217 (GTSKKLSLSR…CKGEKVVQEK (85 aa)). 4 CXXCXGXG motif repeats span residues 146–153 (CSKCKGKG), 162–169 (CPGCQGSG), 189–196 (CNECKGTG), and 205–212 (CSQCKGEK). A disordered region spans residues 387–413 (RRKQAQEAYDEDEDMHGGAQRVQCAQQ). Cysteine 410 bears the Cysteine methyl ester mark. Cysteine 410 carries the S-farnesyl cysteine lipid modification. Positions 411–413 (AQQ) are cleaved as a propeptide — removed in mature form.

In terms of tissue distribution, expressed in seedlings in all tissues, but exceedingly high levels in hypocotyledons and roots.

The protein resides in the cell membrane. Its function is as follows. Plays a continuous role in plant development probably in the structural organization of compartments. This chain is DnaJ protein homolog (DNAJ1), found in Cucumis sativus (Cucumber).